A 293-amino-acid polypeptide reads, in one-letter code: 4-diphosphocytidyl-2-C-methyl-D-erythritol kinase (293 aa).

Lys-16 is a catalytic residue. 99 to 109 contacts ATP; it reads PMGAGLGGGSS. Asp-141 is a catalytic residue.

This sequence belongs to the GHMP kinase family. IspE subfamily.

It carries out the reaction 4-CDP-2-C-methyl-D-erythritol + ATP = 4-CDP-2-C-methyl-D-erythritol 2-phosphate + ADP + H(+). The protein operates within isoprenoid biosynthesis; isopentenyl diphosphate biosynthesis via DXP pathway; isopentenyl diphosphate from 1-deoxy-D-xylulose 5-phosphate: step 3/6. Its function is as follows. Catalyzes the phosphorylation of the position 2 hydroxy group of 4-diphosphocytidyl-2C-methyl-D-erythritol. This is 4-diphosphocytidyl-2-C-methyl-D-erythritol kinase from Burkholderia lata (strain ATCC 17760 / DSM 23089 / LMG 22485 / NCIMB 9086 / R18194 / 383).